The following is a 130-amino-acid chain: Fluoride-specific ion channel FluC (130 aa).

Helical transmembrane passes span 4 to 24 (MINVVAVGTGGFVGAASRYFI), 35 to 55 (GFPIATLIINILGSFLIGLLT), 68 to 88 (LNLFLTTGILGGFTTFSTFSL), and 99 to 119 (AVFGVVNIVLSIAFCLTGVVL). Na(+) is bound by residues glycine 78 and threonine 81.

This sequence belongs to the fluoride channel Fluc/FEX (TC 1.A.43) family.

The protein resides in the cell membrane. It catalyses the reaction fluoride(in) = fluoride(out). With respect to regulation, na(+) is not transported, but it plays an essential structural role and its presence is essential for fluoride channel function. Functionally, fluoride-specific ion channel. Important for reducing fluoride concentration in the cell, thus reducing its toxicity. This Ruminiclostridium cellulolyticum (strain ATCC 35319 / DSM 5812 / JCM 6584 / H10) (Clostridium cellulolyticum) protein is Fluoride-specific ion channel FluC.